The following is a 249-amino-acid chain: Ribosomal RNA small subunit methyltransferase G (249 aa).

S-adenosyl-L-methionine is bound by residues glycine 88, phenylalanine 93, 111 to 113 (DAT), 139 to 140 (AE), and arginine 158. Cysteine 164 and cysteine 249 are disulfide-bonded. The tract at residues 245–246 (RH) is RNA binding.

Belongs to the methyltransferase superfamily. RNA methyltransferase RsmG family.

The protein localises to the cytoplasm. The enzyme catalyses guanosine(527) in 16S rRNA + S-adenosyl-L-methionine = N(7)-methylguanosine(527) in 16S rRNA + S-adenosyl-L-homocysteine. Functionally, specifically methylates the N7 position of guanine in position 527 of 16S rRNA. Shows a marked preference for deproteinized 16S rRNA as substrate and is completely inactive with native 30S subunits as substrate. The protein is Ribosomal RNA small subunit methyltransferase G of Thermus thermophilus (strain ATCC 27634 / DSM 579 / HB8).